The primary structure comprises 85 residues: RNA-binding protein Hfq (85 aa).

In terms of domain architecture, Sm spans 10-70 (DAFLNQVRKE…ISTIIPQRPV (61 aa)).

The protein belongs to the Hfq family. In terms of assembly, homohexamer.

In terms of biological role, RNA chaperone that binds small regulatory RNA (sRNAs) and mRNAs to facilitate mRNA translational regulation in response to envelope stress, environmental stress and changes in metabolite concentrations. Also binds with high specificity to tRNAs. The chain is RNA-binding protein Hfq from Carboxydothermus hydrogenoformans (strain ATCC BAA-161 / DSM 6008 / Z-2901).